The sequence spans 413 residues: Aspartate aminotransferase, cytoplasmic (413 aa).

2 residues coordinate L-aspartate: Gly39 and Trp141. A Phosphoserine modification is found at Ser149. Residue Asn195 coordinates L-aspartate. Residue Lys259 is modified to N6-(pyridoxal phosphate)lysine. Residue Arg387 coordinates L-aspartate.

This sequence belongs to the class-I pyridoxal-phosphate-dependent aminotransferase family. In terms of assembly, homodimer. It depends on pyridoxal 5'-phosphate as a cofactor.

It localises to the cytoplasm. It carries out the reaction L-aspartate + 2-oxoglutarate = oxaloacetate + L-glutamate. The catalysed reaction is L-cysteine + 2-oxoglutarate = 2-oxo-3-sulfanylpropanoate + L-glutamate. The enzyme catalyses (2S)-2-aminobutanoate + 2-oxoglutarate = 2-oxobutanoate + L-glutamate. It catalyses the reaction 3-sulfino-L-alanine + 2-oxoglutarate = 3-sulfinopyruvate + L-glutamate. Biosynthesis of L-glutamate from L-aspartate or L-cysteine. Important regulator of levels of glutamate, the major excitatory neurotransmitter of the vertebrate central nervous system. Acts as a scavenger of glutamate in brain neuroprotection. The aspartate aminotransferase activity is involved in hepatic glucose synthesis during development and in adipocyte glyceroneogenesis. Using L-cysteine as substrate, regulates levels of mercaptopyruvate, an important source of hydrogen sulfide. Mercaptopyruvate is converted into H(2)S via the action of 3-mercaptopyruvate sulfurtransferase (3MST). Hydrogen sulfide is an important synaptic modulator and neuroprotectant in the brain. The protein is Aspartate aminotransferase, cytoplasmic of Macaca fascicularis (Crab-eating macaque).